A 454-amino-acid polypeptide reads, in one-letter code: Probable xylan O-acetyltransferase 9 (454 aa).

Over 1-15 (MKAPPPPSPVAKRAR) the chain is Cytoplasmic. A helical; Signal-anchor for type II membrane protein membrane pass occupies residues 16–36 (VSPFVFLLVLFLLLFSFLYGE). Residues 37-454 (DLKELLGSQA…ELLYTKLFYP (418 aa)) are Lumenal-facing. 4 disulfides stabilise this stretch: Cys101–Cys152, Cys123–Cys188, Cys132–Cys435, and Cys352–Cys431. The GDS motif signature appears at 175 to 177 (GDS). Ser177 functions as the Nucleophile in the catalytic mechanism. N-linked (GlcNAc...) asparagine glycosylation is found at Asn219, Asn293, and Asn394. The Proton donor role is filled by Asp430. A DXXH motif motif is present at residues 430-433 (DCVH). The active-site Proton acceptor is His433.

It belongs to the PC-esterase family. TBL subfamily.

The protein localises to the golgi apparatus membrane. Probable xylan acetyltransferase required for 2-O- and 3-O-monoacetylation of xylosyl residues in xylan. Possesses extremely low activity in vitro. The chain is Probable xylan O-acetyltransferase 9 from Oryza sativa subsp. japonica (Rice).